The chain runs to 359 residues: UDP-3-O-acylglucosamine N-acyltransferase (359 aa).

His248 functions as the Proton acceptor in the catalytic mechanism.

The protein belongs to the transferase hexapeptide repeat family. LpxD subfamily. As to quaternary structure, homotrimer.

The enzyme catalyses a UDP-3-O-[(3R)-3-hydroxyacyl]-alpha-D-glucosamine + a (3R)-hydroxyacyl-[ACP] = a UDP-2-N,3-O-bis[(3R)-3-hydroxyacyl]-alpha-D-glucosamine + holo-[ACP] + H(+). Its pathway is bacterial outer membrane biogenesis; LPS lipid A biosynthesis. In terms of biological role, catalyzes the N-acylation of UDP-3-O-acylglucosamine using 3-hydroxyacyl-ACP as the acyl donor. Is involved in the biosynthesis of lipid A, a phosphorylated glycolipid that anchors the lipopolysaccharide to the outer membrane of the cell. The sequence is that of UDP-3-O-acylglucosamine N-acyltransferase from Chlamydia felis (strain Fe/C-56) (Chlamydophila felis).